A 364-amino-acid chain; its full sequence is Aminomethyltransferase (364 aa).

Belongs to the GcvT family. The glycine cleavage system is composed of four proteins: P, T, L and H.

The enzyme catalyses N(6)-[(R)-S(8)-aminomethyldihydrolipoyl]-L-lysyl-[protein] + (6S)-5,6,7,8-tetrahydrofolate = N(6)-[(R)-dihydrolipoyl]-L-lysyl-[protein] + (6R)-5,10-methylene-5,6,7,8-tetrahydrofolate + NH4(+). The glycine cleavage system catalyzes the degradation of glycine. In Thermotoga petrophila (strain ATCC BAA-488 / DSM 13995 / JCM 10881 / RKU-1), this protein is Aminomethyltransferase.